A 156-amino-acid chain; its full sequence is Small ribosomal subunit protein uS7 (156 aa).

Belongs to the universal ribosomal protein uS7 family. In terms of assembly, part of the 30S ribosomal subunit. Contacts proteins S9 and S11.

One of the primary rRNA binding proteins, it binds directly to 16S rRNA where it nucleates assembly of the head domain of the 30S subunit. Is located at the subunit interface close to the decoding center, probably blocks exit of the E-site tRNA. This Frankia casuarinae (strain DSM 45818 / CECT 9043 / HFP020203 / CcI3) protein is Small ribosomal subunit protein uS7.